Consider the following 357-residue polypeptide: 3-dehydroquinate synthase (357 aa).

NAD(+) contacts are provided by residues 126–127, lysine 139, and lysine 148; that span reads TT. Positions 181, 244, and 261 each coordinate Zn(2+).

This sequence belongs to the sugar phosphate cyclases superfamily. Dehydroquinate synthase family. It depends on Co(2+) as a cofactor. Zn(2+) serves as cofactor. NAD(+) is required as a cofactor.

The protein resides in the cytoplasm. The enzyme catalyses 7-phospho-2-dehydro-3-deoxy-D-arabino-heptonate = 3-dehydroquinate + phosphate. The protein operates within metabolic intermediate biosynthesis; chorismate biosynthesis; chorismate from D-erythrose 4-phosphate and phosphoenolpyruvate: step 2/7. Catalyzes the conversion of 3-deoxy-D-arabino-heptulosonate 7-phosphate (DAHP) to dehydroquinate (DHQ). This is 3-dehydroquinate synthase from Solibacter usitatus (strain Ellin6076).